A 158-amino-acid chain; its full sequence is Crossover junction endodeoxyribonuclease RuvC (158 aa).

Residues D7, E66, and D139 contribute to the active site. D7, E66, and D139 together coordinate Mg(2+).

Belongs to the RuvC family. In terms of assembly, homodimer which binds Holliday junction (HJ) DNA. The HJ becomes 2-fold symmetrical on binding to RuvC with unstacked arms; it has a different conformation from HJ DNA in complex with RuvA. In the full resolvosome a probable DNA-RuvA(4)-RuvB(12)-RuvC(2) complex forms which resolves the HJ. Mg(2+) serves as cofactor.

Its subcellular location is the cytoplasm. The catalysed reaction is Endonucleolytic cleavage at a junction such as a reciprocal single-stranded crossover between two homologous DNA duplexes (Holliday junction).. Its function is as follows. The RuvA-RuvB-RuvC complex processes Holliday junction (HJ) DNA during genetic recombination and DNA repair. Endonuclease that resolves HJ intermediates. Cleaves cruciform DNA by making single-stranded nicks across the HJ at symmetrical positions within the homologous arms, yielding a 5'-phosphate and a 3'-hydroxyl group; requires a central core of homology in the junction. The consensus cleavage sequence is 5'-(A/T)TT(C/G)-3'. Cleavage occurs on the 3'-side of the TT dinucleotide at the point of strand exchange. HJ branch migration catalyzed by RuvA-RuvB allows RuvC to scan DNA until it finds its consensus sequence, where it cleaves and resolves the cruciform DNA. The sequence is that of Crossover junction endodeoxyribonuclease RuvC from Campylobacter lari (strain RM2100 / D67 / ATCC BAA-1060).